Consider the following 725-residue polypeptide: Putative coiled-coil domain-containing protein 144B (725 aa).

Positions 1–11 are enriched in basic and acidic residues; the sequence is MASWGGEKRGG. 5 disordered regions span residues 1–25, 87–188, 213–260, 453–485, and 528–586; these read MASW…ATRK, AARS…NLTE, LPEN…DCDR, NMNQ…DSDR, and EEEM…KVKN. 2 stretches are compositionally biased toward polar residues: residues 129–150 and 165–178; these read PESL…LSDE and PSVS…QSAT. The stretch at 215–244 forms a coiled coil; the sequence is ENKESKEAEQDLELTSEEEQERLKGCENKQ. Residues 224-234 show a composition bias toward acidic residues; it reads QDLELTSEEEQ. The segment covering 453–467 has biased composition (polar residues); that stretch reads NMNQNSDSGSTNNYK. Positions 490-546 form a coiled coil; the sequence is YLHEELQQDMQKFKNEVNTLEEEFLALKKENVQLHKEVEEEMEKHRSNSTELSGTLT. Positions 528–537 are enriched in basic and acidic residues; it reads EEEMEKHRSN. A compositionally biased stretch (low complexity) spans 543–552; sequence GTLTDGTTVG. The span at 563–583 shows a compositional bias: basic and acidic residues; the sequence is PRKENEEHDRPADKTANEKNK. A coiled-coil region spans residues 648–713; that stretch reads LLKLKNNHCD…ALKQENGRKE (66 aa).

Belongs to the CCDC144 family.

The chain is Putative coiled-coil domain-containing protein 144B from Homo sapiens (Human).